The sequence spans 399 residues: Zinc metalloproteinase nas-25 (399 aa).

The signal sequence occupies residues 1–20 (MQIYLGITICLVAFLTVIDC). The 197-residue stretch at 41–237 (QVQRDLTYRW…DQINQYYQCY (197 aa)) folds into the Peptidase M12A domain. 2 N-linked (GlcNAc...) asparagine glycosylation sites follow: Asn52 and Asn61. Cystine bridges form between Cys82-Cys236, Cys106-Cys126, Cys240-Cys260, and Cys265-Cys274. His134 lines the Zn(2+) pocket. The active site involves Glu135. 2 residues coordinate Zn(2+): His138 and His144. The EGF-like domain maps to 232-275 (QYYQCYDSCRNAGQLANCANGGIPNPNNCQVCNCPMGYGGDLCD). Asn371 carries an N-linked (GlcNAc...) asparagine glycan.

Zn(2+) serves as cofactor. In terms of tissue distribution, expressed in pharyngeal muscles, pharyngeal-intestinal valve, rectal gland cells and arcade cells.

It is found in the secreted. Metalloprotease. The chain is Zinc metalloproteinase nas-25 (nas-25) from Caenorhabditis elegans.